The chain runs to 1200 residues: PAN2-PAN3 deadenylation complex catalytic subunit Pan2 (1200 aa).

WD repeat units follow at residues 153 to 193, 195 to 231, 244 to 280, and 328 to 367; these read DENE…QKYA, ETPG…VEHE, VHGN…AITP, and PVGP…SFNP. The segment at 368 to 484 is linker; that stretch reads YSRETEFALP…PTGREEEPLH (117 aa). Positions 485-923 constitute a USP domain; sequence TVSKKYRKVT…VPAILYYVKR (439 aa). Serine 784 bears the Phosphoserine mark. One can recognise an Exonuclease domain in the interval 974-1146; it reads VGLDAEFVTL…EDARTALQLY (173 aa). The a divalent metal cation site is built by aspartate 977, glutamate 979, aspartate 1086, and aspartate 1138. Serine 1188 carries the post-translational modification Phosphoserine.

The protein belongs to the peptidase C19 family. PAN2 subfamily. As to quaternary structure, forms a heterotrimer with an asymmetric homodimer of the regulatory subunit PAN3 to form the poly(A)-nuclease (PAN) deadenylation complex. Interacts with PAN3 isoform 1/Pan3L and isoform 3/Pan3S. Interacts with ZFP36. It depends on a divalent metal cation as a cofactor.

It localises to the cytoplasm. The protein localises to the P-body. It is found in the nucleus. The enzyme catalyses Exonucleolytic cleavage of poly(A) to 5'-AMP.. With respect to regulation, positively regulated by the regulatory subunit PAN3. Functionally, catalytic subunit of the poly(A)-nuclease (PAN) deadenylation complex, one of two cytoplasmic mRNA deadenylases involved in general and miRNA-mediated mRNA turnover. PAN specifically shortens poly(A) tails of RNA and the activity is stimulated by poly(A)-binding protein (PABP). PAN deadenylation is followed by rapid degradation of the shortened mRNA tails by the CCR4-NOT complex. Deadenylated mRNAs are then degraded by two alternative mechanisms, namely exosome-mediated 3'-5' exonucleolytic degradation, or deadenylation-dependent mRNA decaping and subsequent 5'-3' exonucleolytic degradation by XRN1. Also acts as an important regulator of the HIF1A-mediated hypoxic response. Required for HIF1A mRNA stability independent of poly(A) tail length regulation. The protein is PAN2-PAN3 deadenylation complex catalytic subunit Pan2 of Mus musculus (Mouse).